A 445-amino-acid chain; its full sequence is Potassium/proton antiporter CemA (445 aa).

Transmembrane regions (helical) follow at residues 44–64, 330–350, 368–388, and 405–425; these read MQVS…VNIC, ALTC…ILIL, LIII…GWKL, and FILC…KYWI.

It belongs to the CemA family.

The protein resides in the plastid. It localises to the chloroplast inner membrane. The catalysed reaction is K(+)(in) + H(+)(out) = K(+)(out) + H(+)(in). Its function is as follows. Contributes to K(+)/H(+) antiport activity by supporting proton efflux to control proton extrusion and homeostasis in chloroplasts in a light-dependent manner to modulate photosynthesis. Prevents excessive induction of non-photochemical quenching (NPQ) under continuous-light conditions. Indirectly promotes efficient inorganic carbon uptake into chloroplasts. This is Potassium/proton antiporter CemA from Pleurastrum terricola (Filamentous green alga).